Consider the following 328-residue polypeptide: Nuclear transcription factor Y subunit A-8 (328 aa).

A disordered region spans residues 54-86 (KNISFQDQDSSSTLSSAQSSNDVTSSGDDNPSR). Low complexity predominate over residues 57–75 (SFQDQDSSSTLSSAQSSND). The span at 76 to 86 (VTSSGDDNPSR) shows a compositional bias: polar residues. The short motif at 175 to 198 (FVNAKQFHAIMRRRQQRAKLEAQN) is the Subunit association domain (SAD) element. Residues 205–230 (KPYLHESRHVHALKRPRGSGGRFLNT) constitute a DNA-binding region (NFYA/HAP2-type).

This sequence belongs to the NFYA/HAP2 subunit family. In terms of assembly, heterotrimeric transcription factor composed of three components, NF-YA, NF-YB and NF-YC. NF-YB and NF-YC must interact and dimerize for NF-YA association and DNA binding. As to expression, expressed in the whole plant, except roots.

The protein localises to the nucleus. In terms of biological role, stimulates the transcription of various genes by recognizing and binding to a CCAAT motif in promoters. This Arabidopsis thaliana (Mouse-ear cress) protein is Nuclear transcription factor Y subunit A-8 (NFYA8).